Here is a 224-residue protein sequence, read N- to C-terminus: Inhibitor of apoptosis protein (224 aa).

The stretch at 29-92 (IDARNQSFAI…GFWSRNCGFM (64 aa)) is one BIR repeat. Residues Cys-62, Cys-65, His-82, and Cys-89 each coordinate Zn(2+).

Belongs to the asfivirus IAP family. As to quaternary structure, interacts with subunit p17 of host CASP3.

The protein localises to the host cytoplasm. The protein resides in the virion. Its function is as follows. Prevent apoptosis of host cell by inhibiting caspase-3/CASP3 activation to promote the viral replication. Also induces the activation of host NF-kappaB. In African swine fever virus (isolate Pig/Haiti/H811/1981) (ASFV), this protein is Inhibitor of apoptosis protein (p27).